A 244-amino-acid polypeptide reads, in one-letter code: tRNA (guanine-N(1)-)-methyltransferase (244 aa).

S-adenosyl-L-methionine is bound by residues G113 and 133–138 (IGDYVL).

The protein belongs to the RNA methyltransferase TrmD family. In terms of assembly, homodimer.

The protein localises to the cytoplasm. It catalyses the reaction guanosine(37) in tRNA + S-adenosyl-L-methionine = N(1)-methylguanosine(37) in tRNA + S-adenosyl-L-homocysteine + H(+). Functionally, specifically methylates guanosine-37 in various tRNAs. The polypeptide is tRNA (guanine-N(1)-)-methyltransferase (Bacillus anthracis (strain A0248)).